A 124-amino-acid chain; its full sequence is Large ribosomal subunit protein bL12 (124 aa).

The protein belongs to the bacterial ribosomal protein bL12 family. As to quaternary structure, homodimer. Part of the ribosomal stalk of the 50S ribosomal subunit. Forms a multimeric L10(L12)X complex, where L10 forms an elongated spine to which 2 to 4 L12 dimers bind in a sequential fashion. Binds GTP-bound translation factors.

Functionally, forms part of the ribosomal stalk which helps the ribosome interact with GTP-bound translation factors. Is thus essential for accurate translation. This Ralstonia nicotianae (strain ATCC BAA-1114 / GMI1000) (Ralstonia solanacearum) protein is Large ribosomal subunit protein bL12.